Consider the following 514-residue polypeptide: 1,25-dihydroxyvitamin D(3) 24-hydroxylase, mitochondrial (514 aa).

The transit peptide at 1–35 directs the protein to the mitochondrion; sequence MSCPIDKRRPLIAFLRRLRDLGQPPRSVTSKAHVK. Cysteine 462 lines the heme pocket.

The protein belongs to the cytochrome P450 family. Requires heme as cofactor.

It is found in the mitochondrion. It catalyses the reaction calcitriol + 2 reduced [adrenodoxin] + O2 + 2 H(+) = calcitetrol + 2 oxidized [adrenodoxin] + H2O. The enzyme catalyses calcitetrol + 2 reduced [adrenodoxin] + O2 + 2 H(+) = (1S)-1,25-dihydroxy-24-oxocalciol + 2 oxidized [adrenodoxin] + 2 H2O. The catalysed reaction is (1S)-1,25-dihydroxy-24-oxocalciol + 2 reduced [adrenodoxin] + O2 + 2 H(+) = (1S)-1,23,25-trihydroxy-24-oxocalciol + 2 oxidized [adrenodoxin] + H2O. It carries out the reaction (1S)-1,23-dihydroxy-24,25,26,27-tetranorcalciol + 2 reduced [adrenodoxin] + O2 + 2 H(+) = (1S)-1-hydroxy-23-oxo-24,25,26,27-tetranorcalciol + 2 oxidized [adrenodoxin] + 2 H2O. It catalyses the reaction (1S)-1-hydroxy-23-oxo-24,25,26,27-tetranorcalciol + 2 reduced [adrenodoxin] + O2 + H(+) = calcitroate + 2 oxidized [adrenodoxin] + H2O. The enzyme catalyses calcidiol + 2 reduced [adrenodoxin] + O2 + 2 H(+) = secalciferol + 2 oxidized [adrenodoxin] + H2O. The catalysed reaction is secalciferol + 2 reduced [adrenodoxin] + O2 + 2 H(+) = 25-hydroxy-24-oxocalciol + 2 oxidized [adrenodoxin] + 2 H2O. It carries out the reaction 25-hydroxy-24-oxocalciol + 2 reduced [adrenodoxin] + O2 + 2 H(+) = 23S,25-dihydroxy-24-oxocholecalciferol + 2 oxidized [adrenodoxin] + H2O. It catalyses the reaction 20S,23-dihydroxycholecalciferol + 2 reduced [adrenodoxin] + O2 + 2 H(+) = 20S,23,25-trihydroxycholecalciferol + 2 oxidized [adrenodoxin] + H2O. The enzyme catalyses 20S,23-dihydroxycholecalciferol + 2 reduced [adrenodoxin] + O2 + 2 H(+) = 20S,23,24-trihydroxycholecalciferol + 2 oxidized [adrenodoxin] + H2O. The catalysed reaction is 20S-hydroxycholecalciferol + 2 reduced [adrenodoxin] + O2 + 2 H(+) = 20S,25-dihydroxycholecalciferol + 2 oxidized [adrenodoxin] + H2O. It carries out the reaction 20S-hydroxycholecalciferol + 2 reduced [adrenodoxin] + O2 + 2 H(+) = 20S,24S-dihydroxycholecalciferol + 2 oxidized [adrenodoxin] + H2O. It catalyses the reaction 20S-hydroxycholecalciferol + 2 reduced [adrenodoxin] + O2 + 2 H(+) = 20S,24R-dihydroxycholecalciferol + 2 oxidized [adrenodoxin] + H2O. A cytochrome P450 monooxygenase with a key role in vitamin D catabolism and calcium homeostasis. Via C24-oxidation pathway, catalyzes the inactivation of both the vitamin D precursor calcidiol (25-hydroxyvitamin D(3)) and the active hormone calcitriol (1-alpha,25-dihydroxyvitamin D(3)). With initial hydroxylation at C-24 (via C24-oxidation pathway), performs a sequential 6-step oxidation of calcitriol leading to the formation of the biliary metabolite calcitroic acid. Hydroxylates at C-24 or C-25 other vitamin D active metabolites, such as CYP11A1-derived secosteroids 20S-hydroxycholecalciferol and 20S,23-dihydroxycholecalciferol. Mechanistically, uses molecular oxygen inserting one oxygen atom into a substrate, and reducing the second into a water molecule, with two electrons provided by NADPH via FDXR/adrenodoxin reductase and FDX1/adrenodoxin. This chain is 1,25-dihydroxyvitamin D(3) 24-hydroxylase, mitochondrial, found in Mus musculus (Mouse).